The primary structure comprises 320 residues: Protein MRG1 (320 aa).

A disordered region spans residues 1–28; that stretch reads MGSSSKEETASDGDTASGGASPSNDGRL. Over residues 12–24 the composition is skewed to polar residues; that stretch reads DGDTASGGASPSN. The Tudor-knot domain maps to 30–80; that stretch reads SEGERVLAYHGPRVYGAKVQKVELRKKEWKYFVHYLGWNKNWDEWVSADRL. Over residues 93–104 the composition is skewed to basic and acidic residues; that stretch reads ALDKKQGVEKGT. The segment at 93–147 is disordered; sequence ALDKKQGVEKGTKSGRSAQTKTRSSADTKADKDDTKTNAAKGKKRKHESGNEKDN. Over residues 106–115 the composition is skewed to polar residues; that stretch reads SGRSAQTKTR. Over residues 116–128 the composition is skewed to basic and acidic residues; it reads SSADTKADKDDTK. Residues 150–318 enclose the MRG domain; sequence AEKLMKIQIP…KVSDGKGKGK (169 aa).

As to quaternary structure, interacts with HAM1 and HAM2. Interacts (via MRG domain) with CO. Component of the NuA4 histone acetyltransferase complex. As to expression, ubiquitous. Mainly expressed in the vasculature of cotyledons and leaves, and in roots and inflorescences.

It localises to the nucleus. Its function is as follows. Chromatin remodeling factor. Acts as a 'reader' protein by binding to H3K36me3 and H3K36me3 to control histone H4 acetylation. Increases the transcriptional levels of the flowering time genes FLC and FT. Binds the chromatin at the FT promoter upon interaction with CO. The polypeptide is Protein MRG1 (Arabidopsis thaliana (Mouse-ear cress)).